A 334-amino-acid polypeptide reads, in one-letter code: MRALRFLIENRNTVFFTLLVALVLSLYLLVYLFSHTPRPPYPEELKYIAIDEKGHEVSRALPNLNEHQDDEEIFLSVVIPSYNETGRILLMLTDAISFLKEKYGSRWEIVIVDDGSTDNTTQYCLKICKEQFKLNYEQFRIIKFSQNRGKGGAVRQGFLHIRGKYGLFADADGASKFSDVEKLIDAISKIETSSTDLKTTKPAVAIGSRAHMVNTEAVIKRSMIRNCLMYGFHTLVFIFGIRSIKDTQCGFKLFNRAAILKIFPYLHTEGWIFDVEILILAIRKRIQIEEIPISWHEVDGSKMALAIDSIKMAKDLVIIRMAYLLGIYRDNKKC.

At 1–12 the chain is on the lumenal side; it reads MRALRFLIENRN. Residues 13-33 traverse the membrane as a helical segment; the sequence is TVFFTLLVALVLSLYLLVYLF. Topologically, residues 34-334 are cytoplasmic; that stretch reads SHTPRPPYPE…LGIYRDNKKC (301 aa).

The protein belongs to the glycosyltransferase 2 family.

The protein localises to the endoplasmic reticulum membrane. The enzyme catalyses a di-trans,poly-cis-dolichyl phosphate + UDP-alpha-D-glucose = a di-trans,poly-cis-dolichyl beta-D-glucosyl phosphate + UDP. The protein operates within protein modification; protein glycosylation. Endoplasmic reticulum membrane-bound UDP-glucose:dolichyl-phosphate glucosyltransferase involved in protein N-linked glycosylation. In Saccharomyces cerevisiae (strain ATCC 204508 / S288c) (Baker's yeast), this protein is Dolichyl-phosphate beta-glucosyltransferase.